The following is a 324-amino-acid chain: Dehydrogenase/reductase SDR family member 7C-A (324 aa).

Positions 1–17 (MAVPSVMVLPLLIVVFA) are cleaved as a signal peptide. Residue 41 to 65 (VITDAVSGMGSECARLFHAGGARLV) coordinates NAD(+). S178 serves as a coordination point for substrate. Residue Y191 is the Proton acceptor of the active site.

The protein belongs to the short-chain dehydrogenases/reductases (SDR) family.

The protein resides in the secreted. Functionally, putative oxidoreductase. In Danio rerio (Zebrafish), this protein is Dehydrogenase/reductase SDR family member 7C-A (dhrs7ca).